Here is a 368-residue protein sequence, read N- to C-terminus: tRNA-specific 2-thiouridylase MnmA (368 aa).

ATP contacts are provided by residues Gly11 to Ser18 and Met37. Residues Asn97–Asp99 are interaction with target base in tRNA. Cys102 acts as the Nucleophile in catalysis. A disulfide bridge links Cys102 with Cys199. Gly127 lines the ATP pocket. Residues Lys149–Gln151 are interaction with tRNA. Residue Cys199 is the Cysteine persulfide intermediate of the active site. The interval Arg311–Tyr312 is interaction with tRNA.

The protein belongs to the MnmA/TRMU family. As to quaternary structure, interacts with TusE.

Its subcellular location is the cytoplasm. The enzyme catalyses S-sulfanyl-L-cysteinyl-[protein] + uridine(34) in tRNA + AH2 + ATP = 2-thiouridine(34) in tRNA + L-cysteinyl-[protein] + A + AMP + diphosphate + H(+). Its function is as follows. Catalyzes the 2-thiolation of uridine at the wobble position (U34) of tRNA(Lys), tRNA(Glu) and tRNA(Gln), leading to the formation of s(2)U34, the first step of tRNA-mnm(5)s(2)U34 synthesis. Sulfur is provided by IscS, via a sulfur-relay system. Binds ATP and its substrate tRNAs. The protein is tRNA-specific 2-thiouridylase MnmA of Shigella boydii serotype 18 (strain CDC 3083-94 / BS512).